The primary structure comprises 178 residues: M-phase-specific PLK1-interacting protein (178 aa).

Positions 1–15 (MHRPNFRPPTPPYPS) are enriched in pro residues. The disordered stretch occupies residues 1-134 (MHRPNFRPPT…RGREKRMSNE (134 aa)). Gly residues predominate over residues 17 to 34 (GIGGWGGGNNFRGALGGG). Residue R36 is modified to Asymmetric dimethylarginine. 2 positions are modified to phosphoserine: S39 and S46. T50 carries the phosphothreonine modification. Omega-N-methylarginine is present on R56. An asymmetric dimethylarginine mark is found at R58, R67, and R76. The span at 78–96 (GSPSPGGYPGSYSRSPAGS) shows a compositional bias: low complexity. Phosphoserine is present on residues S79, S81, S92, S103, and S114. Residues 97 to 121 (QHQFGYSPGQQQTYPQGSPRTSTPF) show a composition bias toward polar residues. R116 carries the post-translational modification Omega-N-methylarginine. A Phosphothreonine modification is found at T119. 2 positions are modified to phosphoserine: S123 and S132.

As to quaternary structure, interacts with PLK1; phosphorylation-dependent. In terms of processing, phosphorylated during mitosis in the cell cycle probably by CDK1.

Its subcellular location is the nucleus. It localises to the cytoplasm. The protein resides in the cytoskeleton. The protein localises to the microtubule organizing center. It is found in the centrosome. May play a role in maintenance of cell cycle integrity by regulating mitosis or cytokinesis. This Mus musculus (Mouse) protein is M-phase-specific PLK1-interacting protein (Mplkip).